A 231-amino-acid chain; its full sequence is 7-cyano-7-deazaguanine synthase (231 aa).

7–17 provides a ligand contact to ATP; it reads LSSGLDSVAAL. Cys-195, Cys-203, Cys-206, and Cys-209 together coordinate Zn(2+).

This sequence belongs to the QueC family. The cofactor is Zn(2+).

It catalyses the reaction 7-carboxy-7-deazaguanine + NH4(+) + ATP = 7-cyano-7-deazaguanine + ADP + phosphate + H2O + H(+). The protein operates within purine metabolism; 7-cyano-7-deazaguanine biosynthesis. Its function is as follows. Catalyzes the ATP-dependent conversion of 7-carboxy-7-deazaguanine (CDG) to 7-cyano-7-deazaguanine (preQ(0)). The sequence is that of 7-cyano-7-deazaguanine synthase from Methanosarcina mazei (strain ATCC BAA-159 / DSM 3647 / Goe1 / Go1 / JCM 11833 / OCM 88) (Methanosarcina frisia).